The sequence spans 310 residues: MNTQARLTSTQWKARFKGYVQVTKPGIIFGNLISVAGGFLLAAKGDVDLVLMLASLVGLSLVVASGCAINNCIDRDIDAKMQRTCKRVTVTGEIPLSHVLLFGIALGVLGFGILALFTNALALLFAAIGYVVYVGIYSLYMKRNSVYGTLVGSFSGAVPPVVGYCSVTGQMDMGAVILLLMFSLWQMPHSYAIAIFRFNDYAAAKIPVLPVAEGMAKAKHHIVLYIAVFALVSTMLPLAGYTGTAFMAVTCATSLWWLTMALKGYRQDVDMPRWARQVFGFSIITITALSVTMALDFQAVSQTPLFTLVR.

Helical transmembrane passes span 25–45, 49–69, 98–118, 121–141, 145–165, 176–196, 222–242, 245–265, and 277–297; these read PGII…AAKG, LVLM…GCAI, HVLL…ALFT, LALL…SLYM, SVYG…VGYC, VILL…IAIF, IVLY…AGYT, AFMA…LKGY, and QVFG…ALDF.

This sequence belongs to the UbiA prenyltransferase family. Protoheme IX farnesyltransferase subfamily.

It localises to the cell inner membrane. It catalyses the reaction heme b + (2E,6E)-farnesyl diphosphate + H2O = Fe(II)-heme o + diphosphate. It functions in the pathway porphyrin-containing compound metabolism; heme O biosynthesis; heme O from protoheme: step 1/1. Its function is as follows. Converts heme B (protoheme IX) to heme O by substitution of the vinyl group on carbon 2 of heme B porphyrin ring with a hydroxyethyl farnesyl side group. The polypeptide is Protoheme IX farnesyltransferase 2 (Shewanella sp. (strain ANA-3)).